The following is a 212-amino-acid chain: Interleukin-6 (212 aa).

Residues 1–29 form the signal peptide; sequence MNSFSTSAFGPVAFSLGLLLVLPAAFPAP. 2 disulfide bridges follow: C72–C78 and C101–C111. The N-linked (GlcNAc...) asparagine glycan is linked to N73. An N-linked (GlcNAc...) asparagine glycan is attached at N172.

The protein belongs to the IL-6 superfamily. As to quaternary structure, component of a hexamer of two molecules each of IL6, IL6R and IL6ST; first binds to IL6R to associate with the signaling subunit IL6ST. Interacts with IL6R (via the N-terminal ectodomain); this interaction may be affected by IL6R-binding with SORL1, hence decreasing IL6 cis signaling. Interacts with SORL1 (via the N-terminal ectodomain); this interaction leads to IL6 internalization and lysosomal degradation. May form a trimeric complex with the soluble SORL1 ectodomain and soluble IL6R receptor; this interaction might stabilize circulating IL6, hence promoting IL6 trans signaling.

It is found in the secreted. In terms of biological role, cytokine with a wide variety of biological functions in immunity, tissue regeneration, and metabolism. Binds to IL6R, then the complex associates to the signaling subunit IL6ST/gp130 to trigger the intracellular IL6-signaling pathway. The interaction with the membrane-bound IL6R and IL6ST stimulates 'classic signaling', whereas the binding of IL6 and soluble IL6R to IL6ST stimulates 'trans-signaling'. Alternatively, 'cluster signaling' occurs when membrane-bound IL6:IL6R complexes on transmitter cells activate IL6ST receptors on neighboring receiver cells. IL6 is a potent inducer of the acute phase response. Rapid production of IL6 contributes to host defense during infection and tissue injury, but excessive IL6 synthesis is involved in disease pathology. In the innate immune response, is synthesized by myeloid cells, such as macrophages and dendritic cells, upon recognition of pathogens through toll-like receptors (TLRs) at the site of infection or tissue injury. In the adaptive immune response, is required for the differentiation of B cells into immunoglobulin-secreting cells. Plays a major role in the differentiation of CD4(+) T cell subsets. Essential factor for the development of T follicular helper (Tfh) cells that are required for the induction of germinal-center formation. Required to drive naive CD4(+) T cells to the Th17 lineage. Also required for proliferation of myeloma cells and the survival of plasmablast cells. Its function is as follows. Acts as an essential factor in bone homeostasis and on vessels directly or indirectly by induction of VEGF, resulting in increased angiogenesis activity and vascular permeability. Induces, through 'trans-signaling' and synergistically with IL1B and TNF, the production of VEGF. Involved in metabolic controls, is discharged into the bloodstream after muscle contraction increasing lipolysis and improving insulin resistance. 'Trans-signaling' in central nervous system also regulates energy and glucose homeostasis. Mediates, through GLP-1, crosstalk between insulin-sensitive tissues, intestinal L cells and pancreatic islets to adapt to changes in insulin demand. Also acts as a myokine. Plays a protective role during liver injury, being required for maintenance of tissue regeneration. Also has a pivotal role in iron metabolism by regulating HAMP/hepcidin expression upon inflammation or bacterial infection. Through activation of IL6ST-YAP-NOTCH pathway, induces inflammation-induced epithelial regeneration. The polypeptide is Interleukin-6 (IL6) (Cercocebus atys (Sooty mangabey)).